The chain runs to 623 residues: Glutathione import ATP-binding protein GsiA (623 aa).

ABC transporter domains lie at 15 to 269 and 325 to 564; these read VSGL…QTLL and LRSG…RKLM. ATP contacts are provided by residues 49–56 and 357–364; these read GESGSGKS.

The protein belongs to the ABC transporter superfamily. Glutathione importer (TC 3.A.1.5.11) family. As to quaternary structure, the complex is composed of two ATP-binding proteins (GsiA), two transmembrane proteins (GsiC and GsiD) and a solute-binding protein (GsiB).

The protein localises to the cell inner membrane. It carries out the reaction glutathione(out) + ATP + H2O = glutathione(in) + ADP + phosphate + H(+). Functionally, part of the ABC transporter complex GsiABCD involved in glutathione import. Responsible for energy coupling to the transport system. The polypeptide is Glutathione import ATP-binding protein GsiA (Salmonella typhimurium (strain LT2 / SGSC1412 / ATCC 700720)).